Reading from the N-terminus, the 200-residue chain is Interleukin 17-like protein (200 aa).

The signal sequence occupies residues 1–26; it reads MGNFFLFAMTLVVCSVIVLLTGVADS. An N-linked (GlcNAc...) asparagine glycan is attached at Asn-46. 2 disulfide bridges follow: Cys-122-Cys-175 and Cys-127-Cys-177. An N-linked (GlcNAc...) asparagine glycan is attached at Asn-192.

It belongs to the IL-17 family. As to expression, expressed in several tissues including hemocytes, gills, mantle, adductor muscle, labial palps, digestive glands and heart with highest levels in gills and lowest levels in adductor muscle and heart.

The protein localises to the secreted. This Magallana gigas (Pacific oyster) protein is Interleukin 17-like protein.